The sequence spans 370 residues: 3,7-dimethylxanthine N-methyltransferase CkTbS (370 aa).

Position 24 (tyrosine 24) interacts with S-adenosyl-L-homocysteine. A theobromine-binding site is contributed by threonine 31. The S-adenosyl-L-homocysteine site is built by cysteine 67, asparagine 72, aspartate 104, leucine 105, serine 139, and phenylalanine 140. Residues tyrosine 157, histidine 160, and tryptophan 161 each coordinate theobromine. Position 178 (asparagine 178) interacts with Mg(2+). Residue histidine 226 coordinates theobromine. 3 residues coordinate Mg(2+): aspartate 264, phenylalanine 266, and asparagine 267. Phenylalanine 322 contributes to the theobromine binding site.

Belongs to the methyltransferase superfamily. Type-7 methyltransferase family. It depends on Mg(2+) as a cofactor.

The catalysed reaction is 7-methylxanthine + S-adenosyl-L-methionine = theobromine + S-adenosyl-L-homocysteine + H(+). The protein operates within alkaloid biosynthesis. Functionally, involved in the biosynthesis of caffeine in cv. Puer. Involved in the biosynthesis of theacrine in cv. Kucha, a caffeine-like xanthine alkaloid with diverse beneficial biological activities including anti-depressive, sedative, and hypnotic activities, improving learning and memory, increasing exercise activity, and preventing nonalcoholic fatty liver disease. Catalyzes the conversion of 7-methylxanthine (7mX) to theobromine but not able to convert paraxanthine to caffeine. The protein is 3,7-dimethylxanthine N-methyltransferase CkTbS of Camellia sinensis var. assamica (Assam tea).